A 136-amino-acid chain; its full sequence is Large ribosomal subunit protein uL16 (136 aa).

This sequence belongs to the universal ribosomal protein uL16 family. In terms of assembly, part of the 50S ribosomal subunit.

Functionally, binds 23S rRNA and is also seen to make contacts with the A and possibly P site tRNAs. The sequence is that of Large ribosomal subunit protein uL16 from Rickettsia canadensis (strain McKiel).